Consider the following 164-residue polypeptide: Cyclic pyranopterin monophosphate synthase (164 aa).

Substrate is bound by residues 75 to 77 and 116 to 117; these read MCH and ME. Residue Asp131 is part of the active site.

This sequence belongs to the MoaC family. Homohexamer; trimer of dimers.

The enzyme catalyses (8S)-3',8-cyclo-7,8-dihydroguanosine 5'-triphosphate = cyclic pyranopterin phosphate + diphosphate. It participates in cofactor biosynthesis; molybdopterin biosynthesis. In terms of biological role, catalyzes the conversion of (8S)-3',8-cyclo-7,8-dihydroguanosine 5'-triphosphate to cyclic pyranopterin monophosphate (cPMP). The protein is Cyclic pyranopterin monophosphate synthase of Staphylococcus aureus (strain USA300).